The sequence spans 865 residues: cGMP-specific 3',5'-cyclic phosphodiesterase (865 aa).

Positions 69–83 are enriched in low complexity; that stretch reads CSCSSQQSSRADSSA. The interval 69–92 is disordered; sequence CSCSSQQSSRADSSAPGTPTRKIS. S92 bears the Phosphoserine mark. GAF domains lie at 154-304 and 336-493; these read DVTA…GIVL and SLEV…GLGI. Residues 526–850 form the PDEase domain; sequence ETKELQSLAA…QKWQALAEQQ (325 aa). H603 serves as the catalytic Proton donor. Zn(2+) is bound by residues H607, H643, D644, and D754. D644 contacts Mg(2+). Q807 provides a ligand contact to 3',5'-cyclic GMP.

It belongs to the cyclic nucleotide phosphodiesterase family. Requires Zn(2+) as cofactor. The cofactor is Mg(2+). Phosphorylation is regulated by binding of cGMP to the two allosteric sites. Phosphorylation by PRKG1 leads to its activation. Isoform PDE5A1 and isoform PDE5A2 are highly expressed in the cerebellum, hippocampus, retina, lung, heart, spleen, and thoracic artery. Isoform PDE5A1, but not isoform PDE5A2, is also abundantly expressed in the pylorus.

Its subcellular location is the cytoplasm. The protein resides in the cytosol. It catalyses the reaction 3',5'-cyclic GMP + H2O = GMP + H(+). It participates in purine metabolism; 3',5'-cyclic GMP degradation; GMP from 3',5'-cyclic GMP: step 1/1. With respect to regulation, inhibited by zaprinast. In terms of biological role, plays a role in signal transduction by regulating the intracellular concentration of cyclic nucleotides. This phosphodiesterase catalyzes the specific hydrolysis of cGMP to 5'-GMP. Specifically regulates nitric-oxide-generated cGMP. This Canis lupus familiaris (Dog) protein is cGMP-specific 3',5'-cyclic phosphodiesterase (PDE5A).